Reading from the N-terminus, the 210-residue chain is Glutathione S-transferase P (210 aa).

A GST N-terminal domain is found at 2 to 81; it reads PPYTVVYFPV…HLGRTLGLYG (80 aa). Tyrosine 4 carries the phosphotyrosine; by EGFR modification. Glutathione-binding positions include tyrosine 8, arginine 14, tryptophan 39, lysine 45, and 52-53; that span reads QL. Threonine 62 bears the Phosphothreonine mark. 65–66 contributes to the glutathione binding site; it reads QS. In terms of domain architecture, GST C-terminal spans 83 to 204; that stretch reads DQREAALVDM…ASPEHVNLPI (122 aa). Residues lysine 103 and lysine 116 each carry the N6-succinyllysine modification. Position 128 is an N6-acetyllysine (lysine 128).

Belongs to the GST superfamily. Pi family. As to quaternary structure, homodimer. Interacts with CDK5.

The protein resides in the cytoplasm. Its subcellular location is the mitochondrion. It is found in the nucleus. The enzyme catalyses RX + glutathione = an S-substituted glutathione + a halide anion + H(+). It carries out the reaction prostaglandin J2 + glutathione = prostaglandin J2-S-(R)-glutathione. It catalyses the reaction prostaglandin J2 + glutathione = prostaglandin J2-S-(S)-glutathione. The catalysed reaction is prostaglandin A2 + glutathione = prostaglandin A2-S-(S)-glutathione. The enzyme catalyses 11(S)-hydroxy-14(S),15(S)-epoxy-(5Z,8Z,12E)-eicosatrienoate + glutathione = (11S,15S)-dihydroxy-14(R)-S-glutathionyl-(5Z,8Z,12E)-eicosatrienoate. In terms of biological role, conjugation of reduced glutathione to a wide number of exogenous and endogenous hydrophobic electrophiles. Involved in the formation of glutathione conjugates of both prostaglandin A2 (PGA2) and prostaglandin J2 (PGJ2). Participates in the formation of novel hepoxilin regioisomers. Negatively regulates CDK5 activity via p25/p35 translocation to prevent neurodegeneration. This chain is Glutathione S-transferase P (GSTP1), found in Macaca mulatta (Rhesus macaque).